Reading from the N-terminus, the 151-residue chain is Linear element protein Mug20 (151 aa).

The stretch at 56-140 (EEKLRALDKL…CAMEKLKMIE (85 aa)) forms a coiled coil.

In terms of assembly, component of linear elements (LinEs), which are similar to synaptonemal complexes, at least composed of rec27, rec25, rec10 and mug20. Interacts with rec10.

The protein localises to the cytoplasm. It is found in the nucleus. It localises to the chromosome. During meiotic DNA recombination, binds to and may help activate DNA double-strand break (DSB) hotspot sites. This chain is Linear element protein Mug20, found in Schizosaccharomyces pombe (strain 972 / ATCC 24843) (Fission yeast).